The primary structure comprises 1642 residues: DNA-directed RNA polymerase I subunit RPA1 (1642 aa).

Residues Cys-66, Cys-69, Cys-75, and His-78 each contribute to the Zn(2+) site. Mg(2+) is bound by residues Asp-565, Asp-567, and Asp-569. The segment at 939–951 (PQDFFFHCMAGRE) is bridging helix. The segment at 1337 to 1428 (DADKDDDNDL…GNDNDGDDKA (92 aa)) is disordered. Positions 1340–1350 (KDDDNDLDNGD) are enriched in acidic residues. The segment covering 1351 to 1361 (EVGRSKAKAND) has biased composition (basic and acidic residues). 2 stretches are compositionally biased toward acidic residues: residues 1362 to 1373 (DDSSDDNDDDDA) and 1386 to 1424 (KDYDDPDDVEELHDANDDDDEAEDEDDEEKGQDGNDNDG). 2 positions are modified to phosphoserine: Ser-1364 and Ser-1365.

Belongs to the RNA polymerase beta' chain family. As to quaternary structure, component of the RNA polymerase I (Pol I) complex consisting of at least 13 subunits. Post-translationally, phosphorylated.

It localises to the nucleus. Its subcellular location is the nucleolus. It carries out the reaction RNA(n) + a ribonucleoside 5'-triphosphate = RNA(n+1) + diphosphate. Functionally, DNA-dependent RNA polymerase catalyzes the transcription of DNA into RNA using the four ribonucleoside triphosphates as substrates. Largest and catalytic core component of RNA polymerase I which synthesizes ribosomal RNA precursors. Forms the polymerase active center together with the second largest subunit. A single stranded DNA template strand of the promoter is positioned within the central active site cleft of Pol I. A bridging helix emanates from RPA1 and crosses the cleft near the catalytic site and is thought to promote translocation of Pol I by acting as a ratchet that moves the RNA-DNA hybrid through the active site by switching from straight to bent conformations at each step of nucleotide addition. This Drosophila melanogaster (Fruit fly) protein is DNA-directed RNA polymerase I subunit RPA1 (RpI1).